Reading from the N-terminus, the 119-residue chain is HTH-type transcriptional regulator SarX (119 aa).

The segment at residues 55 to 78 is a DNA-binding region (H-T-H motif); it reads LKTAMDELDLSRTKLLVSIRRLIE.

Belongs to the SarA family.

It is found in the cytoplasm. Its function is as follows. Involved in the regulation of virulence genes. Acts as a repressor of the agr locus and consequently targets genes regulated by the agr system such as sspA, hla and hlb. Binds directly to the agr promoter region. This is HTH-type transcriptional regulator SarX (sarX) from Staphylococcus aureus (strain bovine RF122 / ET3-1).